The sequence spans 861 residues: Linoleate 9S-lipoxygenase 2 (861 aa).

The PLAT domain occupies 29–160 (NALDFTDLAG…RYKSDRIFFV (132 aa)). The Lipoxygenase domain occupies 163-861 (PYLPSKTPEL…GKGIPNSVSI (699 aa)). Positions 212-246 (EGKENVRTTLGGSAEYPYPRRGRTGRPPTRTDPKS) are disordered. Positions 522, 527, 713, 717, and 861 each coordinate Fe cation.

Belongs to the lipoxygenase family. As to quaternary structure, monomer. The cofactor is Fe cation. As to expression, highly expressed in tubers and roots. Detected in flower buds and leaves.

The protein resides in the cytoplasm. It carries out the reaction (9Z,12Z)-octadecadienoate + O2 = (9S)-hydroperoxy-(10E,12Z)-octadecadienoate. The protein operates within lipid metabolism; oxylipin biosynthesis. In terms of biological role, plant lipoxygenases may be involved in a number of diverse aspects of plant physiology including growth and development, pest resistance, and senescence or responses to wounding. Catalyzes the hydroperoxidation of lipids containing a cis,cis-1,4-pentadiene structure. Linoleic acid is the preferred substrate, but is also active with linolenic and arachidonic acids. The polypeptide is Linoleate 9S-lipoxygenase 2 (LOX1.2) (Solanum tuberosum (Potato)).